The sequence spans 102 residues: Biotrophy-associated secreted protein 2 (102 aa).

The signal sequence occupies residues 1-19; it reads MVRVSTFAAILAMALSVTA. A glycan (N-linked (GlcNAc...) asparagine) is linked at N46.

It is found in the secreted. Secreted effector involved in biotrophic colonization of plant cells. In Pyricularia oryzae (strain 70-15 / ATCC MYA-4617 / FGSC 8958) (Rice blast fungus), this protein is Biotrophy-associated secreted protein 2.